A 323-amino-acid chain; its full sequence is Ubiquinone biosynthesis protein COQ4, mitochondrial (323 aa).

Positions 209, 210, 213, and 225 each coordinate Zn(2+).

Belongs to the COQ4 family. As to quaternary structure, component of a multi-subunit COQ enzyme complex, composed of at least COQ3, COQ4, COQ5, COQ6, COQ7 and COQ9. Zn(2+) serves as cofactor.

Its subcellular location is the mitochondrion inner membrane. The enzyme catalyses a 4-hydroxy-3-methoxy-5-(all-trans-polyprenyl)benzoate + H(+) = a 2-methoxy-6-(all-trans-polyprenyl)phenol + CO2. It functions in the pathway cofactor biosynthesis; ubiquinone biosynthesis. In terms of biological role, lyase that catalyzes the C1-decarboxylation of 4-hydroxy-3-methoxy-5-(all-trans-polyprenyl)benzoic acid into 2-methoxy-6-(all-trans-polyprenyl)phenol during ubiquinone biosynthesis. This Debaryomyces hansenii (strain ATCC 36239 / CBS 767 / BCRC 21394 / JCM 1990 / NBRC 0083 / IGC 2968) (Yeast) protein is Ubiquinone biosynthesis protein COQ4, mitochondrial.